Here is a 144-residue protein sequence, read N- to C-terminus: Small ribosomal subunit protein bS6 (144 aa).

The tract at residues 95–144 is disordered; sequence PVTTPSPMMQDDKSKPDENSRGTAAPTVNVADDSASGAQVVAAEENDTQS. The segment covering 104 to 114 has biased composition (basic and acidic residues); it reads QDDKSKPDENS.

Belongs to the bacterial ribosomal protein bS6 family.

In terms of biological role, binds together with bS18 to 16S ribosomal RNA. This is Small ribosomal subunit protein bS6 from Nitrosomonas eutropha (strain DSM 101675 / C91 / Nm57).